We begin with the raw amino-acid sequence, 210 residues long: Thymidylate kinase (210 aa).

Position 10 to 17 (10 to 17) interacts with ATP; it reads GPEGAGKS.

The protein belongs to the thymidylate kinase family.

It carries out the reaction dTMP + ATP = dTDP + ADP. In terms of biological role, phosphorylation of dTMP to form dTDP in both de novo and salvage pathways of dTTP synthesis. The polypeptide is Thymidylate kinase (Pseudomonas aeruginosa (strain LESB58)).